A 350-amino-acid polypeptide reads, in one-letter code: Histidinol-phosphate aminotransferase (350 aa).

K210 carries the post-translational modification N6-(pyridoxal phosphate)lysine.

Belongs to the class-II pyridoxal-phosphate-dependent aminotransferase family. Histidinol-phosphate aminotransferase subfamily. In terms of assembly, homodimer. The cofactor is pyridoxal 5'-phosphate.

The catalysed reaction is L-histidinol phosphate + 2-oxoglutarate = 3-(imidazol-4-yl)-2-oxopropyl phosphate + L-glutamate. It participates in amino-acid biosynthesis; L-histidine biosynthesis; L-histidine from 5-phospho-alpha-D-ribose 1-diphosphate: step 7/9. The polypeptide is Histidinol-phosphate aminotransferase (Pseudomonas syringae pv. syringae (strain B728a)).